The chain runs to 622 residues: Deoxynucleoside triphosphate triphosphohydrolase SAMHD1 (622 aa).

An SAM domain is found at 26-89 (WDVEDTVAYL…LHCLQKLSQI (64 aa)). The GTP site is built by lysine 95 and valine 96. Asparagine 98 lines the dGTP pocket. The GTP site is built by aspartate 116, glutamine 121, and arginine 124. DGTP contacts are provided by glutamine 128, leucine 129, valine 135, and arginine 143. Residue glutamine 128 participates in dATP binding. Glutamine 128 lines the dCTP pocket. Glutamine 128 provides a ligand contact to dTTP. A dATP-binding site is contributed by arginine 143. Arginine 143 is a dCTP binding site. Residue arginine 143 participates in dTTP binding. The HD domain occupies 143–296 (RFEHSIGVGY…GIDVDKWDYF (154 aa)). The Mn(2+) site is built by histidine 146, histidine 185, and aspartate 186. Positions 189 and 194 each coordinate dATP. Residues histidine 189 and histidine 194 each coordinate dCTP. DTTP-binding residues include histidine 189 and histidine 194. The active site involves histidine 212. Aspartate 291 serves as a coordination point for Mn(2+). 12 residues coordinate dGTP: lysine 292, tyrosine 295, aspartate 299, arginine 313, arginine 332, lysine 334, asparagine 338, arginine 346, tyrosine 354, glutamine 355, histidine 356, and lysine 357. Lysine 292, tyrosine 295, and aspartate 299 together coordinate dATP. Positions 292, 295, and 299 each coordinate dCTP. DTTP contacts are provided by lysine 292, tyrosine 295, and aspartate 299. Arginine 346 contacts dATP. Arginine 346 lines the dCTP pocket. Residue glutamine 355 coordinates dATP. Glutamine 355 is a binding site for dCTP. Glutamine 355 is a dTTP binding site. Residues arginine 431, lysine 435, and lysine 502 each coordinate GTP. Lysine 502 is a dGTP binding site. The disordered stretch occupies residues 571 to 622 (TPLKQDWHAREDEDEEEEEKHRQNQTLPHHTPQRTGRNVKVDLFQARGETKL). Over residues 594 to 606 (NQTLPHHTPQRTG) the composition is skewed to polar residues.

This sequence belongs to the SAMHD1 family. As to quaternary structure, homodimer; in absence of GTP and dNTP. Homotetramer; in GTP- and dNTP-bound form. Interacts with rbbp8/CtIP. Zn(2+) is required as a cofactor.

It is found in the nucleus. It localises to the chromosome. It carries out the reaction a 2'-deoxyribonucleoside 5'-triphosphate + H2O = a 2'-deoxyribonucleoside + triphosphate + H(+). The enzyme catalyses dATP + H2O = 2'-deoxyadenosine + triphosphate + H(+). It catalyses the reaction dCTP + H2O = 2'-deoxycytidine + triphosphate + H(+). The catalysed reaction is dGTP + H2O = 2'-deoxyguanosine + triphosphate + H(+). It carries out the reaction dTTP + H2O = thymidine + triphosphate + H(+). Its activity is regulated as follows. Allosterically activated and regulated via the combined actions of GTP and dNTPs (dATP, dGTP, dTTP and dCTP): Allosteric site 1 binds GTP, while allosteric site 2 binds dNTP. Allosteric activation promotes the formation of highly active homotetramers. Protein that acts both as a host restriction factor involved in defense response to virus and as a regulator of DNA end resection at stalled replication forks. Has deoxynucleoside triphosphate (dNTPase) activity, which is required to restrict infection by viruses: dNTPase activity reduces cellular dNTP levels to levels too low for retroviral reverse transcription to occur, blocking early-stage virus replication in dendritic and other myeloid cells. Functions during S phase at stalled DNA replication forks to promote the resection of gapped or reversed forks: acts by stimulating the exonuclease activity of MRE11, activating the ATR-CHK1 pathway and allowing the forks to restart replication. Its ability to promote degradation of nascent DNA at stalled replication forks is required to prevent induction of type I interferons, thereby preventing chronic inflammation. Ability to promote DNA end resection at stalled replication forks is independent of dNTPase activity. This chain is Deoxynucleoside triphosphate triphosphohydrolase SAMHD1, found in Danio rerio (Zebrafish).